The chain runs to 164 residues: Small ribosomal subunit protein uS5 (164 aa).

The S5 DRBM domain maps to 9 to 72; that stretch reads YQEKLLKISR…AAAKKNIVKI (64 aa).

Belongs to the universal ribosomal protein uS5 family. As to quaternary structure, part of the 30S ribosomal subunit. Contacts proteins S4 and S8.

Its function is as follows. With S4 and S12 plays an important role in translational accuracy. Functionally, located at the back of the 30S subunit body where it stabilizes the conformation of the head with respect to the body. This is Small ribosomal subunit protein uS5 from Fusobacterium nucleatum subsp. nucleatum (strain ATCC 25586 / DSM 15643 / BCRC 10681 / CIP 101130 / JCM 8532 / KCTC 2640 / LMG 13131 / VPI 4355).